We begin with the raw amino-acid sequence, 215 residues long: Large ribosomal subunit protein uL3 (215 aa).

Glutamine 156 bears the N5-methylglutamine mark.

The protein belongs to the universal ribosomal protein uL3 family. As to quaternary structure, part of the 50S ribosomal subunit. Forms a cluster with proteins L14 and L19. In terms of processing, methylated by PrmB.

One of the primary rRNA binding proteins, it binds directly near the 3'-end of the 23S rRNA, where it nucleates assembly of the 50S subunit. This chain is Large ribosomal subunit protein uL3, found in Xylella fastidiosa (strain 9a5c).